A 517-amino-acid chain; its full sequence is Synaptic vesicular amine transporter (517 aa).

At 1 to 20 (MALSELALLRRLQESRHSRK) the chain is on the cytoplasmic side. Residues 21-41 (LILFIVFLALLLDNMLLTVVV) form a helical membrane-spanning segment. At 42–132 (PIIPSYLYSI…EDKDLLNENV (91 aa)) the chain is on the extracellular side. 3 N-linked (GlcNAc...) asparagine glycosylation sites follow: N84, N91, and N112. A disulfide bond links C120 and C327. A helical membrane pass occupies residues 133–153 (QVGLLFASKATVQLLTNPFIG). Residues 154 to 162 (LLTNRIGYP) lie on the Cytoplasmic side of the membrane. A helical membrane pass occupies residues 163-183 (IPMFTGFCIMFISTVMFAFSR). Residues 184–192 (TYAFLLIAR) are Extracellular-facing. A helical membrane pass occupies residues 193–213 (SLQGIGSSCSSVAGMGMLASV). The Cytoplasmic segment spans residues 214–222 (YTDDEERGN). A helical membrane pass occupies residues 223–245 (AMGIALGGLAMGVLVGPPFGSVL). Residues L231 and V235 each contribute to the serotonin site. The Extracellular segment spans residues 246-251 (YEFVGK). A helical transmembrane segment spans residues 252-274 (TAPFLVLAALVLLDGAIQLFVLQ). Residues 275–294 (PSRVQPESQKGTPLTTLLRD) are Cytoplasmic-facing. The helical transmembrane segment at 295 to 314 (PYILIAAGSICFANMGIAML) threads the bilayer. Residues N308, I311, E315, F337, and Y344 each coordinate serotonin. The Extracellular portion of the chain corresponds to 315–331 (EPALPIWMMETMCSHKW). Residues 332 to 355 (QLGVAFLPASVSYLIGTNVFGILA) traverse the membrane as a helical segment. Residues 356–360 (HKMGR) lie on the Cytoplasmic side of the membrane. The chain crosses the membrane as a helical span at residues 361–381 (WLCALLGMIIVGMSILCIPLA). Residues 382–392 (KNIYGLIAPNF) lie on the Extracellular side of the membrane. Residues 393 to 413 (GVGFAIGMVDSSMMPIMGYLV) traverse the membrane as a helical segment. D402 contacts serotonin. The Cytoplasmic portion of the chain corresponds to 414–417 (DLRH). A helical transmembrane segment spans residues 418–438 (VSVYGSVYAIADVAFCMGYAI). Serotonin is bound at residue Y436. Residues 439–443 (GPSAG) lie on the Extracellular side of the membrane. The chain crosses the membrane as a helical span at residues 444–465 (GAIAKAIGFPWLMTIIGIIDIL). Residues 466–517 (FAPLCFFLRSPPAKEEKMAILMDHNCPIKTKMYTQNSSQSHPIGEDEESESD) are Cytoplasmic-facing. Residues S514 and S516 each carry the phosphoserine; by CK2 modification.

This sequence belongs to the major facilitator superfamily. Vesicular transporter family. Interacts with SLC6A3.

The protein resides in the cytoplasmic vesicle. It localises to the secretory vesicle. Its subcellular location is the synaptic vesicle membrane. It is found in the secretory vesicle membrane. The protein localises to the cell projection. The protein resides in the axon. It localises to the dendrite. It catalyses the reaction serotonin(in) + 2 H(+)(out) = serotonin(out) + 2 H(+)(in). It carries out the reaction dopamine(in) + 2 H(+)(out) = dopamine(out) + 2 H(+)(in). The enzyme catalyses histamine(in) + 2 H(+)(out) = histamine(out) + 2 H(+)(in). Strongly inhibited by reserpine and tetrabenazine. Also inhibited to a lesser extent by ketanserin and fenfluramine. Reserpine and ketanserin inhibit by blocking the substrate-binding pocket. Tetrabenazine traps SLC18A2/VMAT2 in an occluded conformation and its inhibition is specific to SLC18A2/VMAT2 but not SLC18A1/VMAT1. Its function is as follows. Electrogenic antiporter that exchanges one cationic monoamine with two intravesicular protons across the membrane of secretory and synaptic vesicles. Uses the electrochemical proton gradient established by the V-type proton-pump ATPase to accumulate high concentrations of monoamines inside the vesicles prior to their release via exocytosis. Transports a variety of catecholamines such as dopamine, adrenaline and noradrenaline, histamine, and indolamines such as serotonin. Regulates the transvesicular monoaminergic gradient that determines the quantal size. Mediates somatodendritic dopamine release in hippocampal neurons, likely as part of a regulated secretory pathway that integrates retrograde synaptic signals. Acts as a primary transporter for striatal dopamine loading ensuring impulse-dependent release of dopamine at the synaptic cleft. Responsible for histamine and serotonin storage and subsequent corelease from mast cell granules. The polypeptide is Synaptic vesicular amine transporter (SLC18A2) (Bos taurus (Bovine)).